Reading from the N-terminus, the 723-residue chain is BBSome complex assembly protein BBS10 (723 aa).

This sequence belongs to the TCP-1 chaperonin family. Component of a complex composed at least of MKKS, BBS10, BBS12, TCP1, CCT2, CCT3, CCT4, CCT5 and CCT8.

The protein resides in the cell projection. The protein localises to the cilium. Probable molecular chaperone that assists the folding of proteins upon ATP hydrolysis. Plays a role in the assembly of BBSome, a complex involved in ciliogenesis regulating transports vesicles to the cilia. Involved in adipogenic differentiation. In Homo sapiens (Human), this protein is BBSome complex assembly protein BBS10 (BBS10).